Reading from the N-terminus, the 581-residue chain is Probable peptidoglycan D,D-transpeptidase PenA (581 aa).

A helical membrane pass occupies residues 28–48 (ISFVLMAMAVLFACLIARGLY). Ser310 (acyl-ester intermediate) is an active-site residue.

The protein belongs to the transpeptidase family. FtsI subfamily.

The protein localises to the cell inner membrane. It catalyses the reaction Preferential cleavage: (Ac)2-L-Lys-D-Ala-|-D-Ala. Also transpeptidation of peptidyl-alanyl moieties that are N-acyl substituents of D-alanine.. The protein operates within cell wall biogenesis; peptidoglycan biosynthesis. Its function is as follows. Catalyzes cross-linking of the peptidoglycan cell wall at the division septum. This chain is Probable peptidoglycan D,D-transpeptidase PenA, found in Neisseria gonorrhoeae.